Consider the following 221-residue polypeptide: Intraflagellar transport-associated protein (221 aa).

Phosphoserine is present on S59.

As to quaternary structure, interacts with IFT122; the interaction associates IFTAP with IFT-A complex.

Seems to play a role in ciliary BBSome localization, maybe through interaction with IFT-A complex. This chain is Intraflagellar transport-associated protein, found in Homo sapiens (Human).